The primary structure comprises 432 residues: Acetylserotonin O-methyltransferase (432 aa).

S-adenosyl-L-methionine is bound by residues Tyr146, Trp163, Asp209, 235–237 (GDF), and Arg252. His255 acts as the Proton donor/acceptor in catalysis. Residues Asp256, Asn302, and Gln306 each contribute to the substrate site. A disordered region spans residues 373–432 (VPGARSDAAGTGSGTGNTGSGIMLQGETLESEVSAPQAGSDVGGAGNEPRSGTLKQGDWK).

It belongs to the class I-like SAM-binding methyltransferase superfamily. Cation-independent O-methyltransferase family. As to quaternary structure, homodimer. In terms of tissue distribution, expressed predominantly in the pineal gland (at protein level). Very low expression, if any, in the retina.

The enzyme catalyses N-acetylserotonin + S-adenosyl-L-methionine = melatonin + S-adenosyl-L-homocysteine + H(+). Its pathway is aromatic compound metabolism; melatonin biosynthesis; melatonin from serotonin: step 1/2. Functionally, catalyzes the transfer of a methyl group onto N-acetylserotonin, producing melatonin (N-acetyl-5-methoxytryptamine). This Rattus norvegicus (Rat) protein is Acetylserotonin O-methyltransferase (Asmt).